Here is a 452-residue protein sequence, read N- to C-terminus: MTENEQIFWNRVLELAQSQLKQATFDFFVSDAKLLKVEGNIATILLDDMKKLFWEKNLQPVVLTAGFEVFNTEISIEYVFEETQSTSNSPQISQNKTAELATETLPFVQNDLNPKYSFDNFVIGDENRWAFTASVSVADLPGTTYNPLFIYGGPGLGKTHLLNAIGNSVLASNPKARIKYISAENFINEFVVHIRLQNMDELKKKFRNLDLLLIDDIQSLAKKSLAATQEEFFNTFNALHDNNKQIVLTSDRTPDDLNDLEQRLVTRFKWGLTVNITPPDFETRVAILNNKIQEYNYSFLSETIEYLAGQFDSNVRDLEGALKDISLVANFKKLDVITVEVAAEAIRARKQDSSPKMIVIPIEDIQKQVGKFYGVTVKEIKSTKRTQNIVLARQVGMYLAREMTDNSLPKIGKEFGGRDHSTVLHAYNKIKNMLAQDDSLKIEMETIKNKIK.

Residues 1-84 (MTENEQIFWN…SIEYVFEETQ (84 aa)) are domain I, interacts with DnaA modulators. Residues 84–110 (QSTSNSPQISQNKTAELATETLPFVQN) are domain II. Residues 111–329 (DLNPKYSFDN…GALKDISLVA (219 aa)) are domain III, AAA+ region. 4 residues coordinate ATP: Gly155, Gly157, Lys158, and Thr159. The segment at 330 to 452 (NFKKLDVITV…EMETIKNKIK (123 aa)) is domain IV, binds dsDNA.

Belongs to the DnaA family. As to quaternary structure, oligomerizes as a right-handed, spiral filament on DNA at oriC.

The protein resides in the cytoplasm. In terms of biological role, plays an essential role in the initiation and regulation of chromosomal replication. ATP-DnaA binds to the origin of replication (oriC) to initiate formation of the DNA replication initiation complex once per cell cycle. Binds the DnaA box (a 9 base pair repeat at the origin) and separates the double-stranded (ds)DNA. Forms a right-handed helical filament on oriC DNA; dsDNA binds to the exterior of the filament while single-stranded (ss)DNA is stabiized in the filament's interior. The ATP-DnaA-oriC complex binds and stabilizes one strand of the AT-rich DNA unwinding element (DUE), permitting loading of DNA polymerase. After initiation quickly degrades to an ADP-DnaA complex that is not apt for DNA replication. Binds acidic phospholipids. This Streptococcus mutans serotype c (strain ATCC 700610 / UA159) protein is Chromosomal replication initiator protein DnaA.